The sequence spans 417 residues: Serine hydroxymethyltransferase (417 aa).

Residues Leu121 and 125-127 (GHL) each bind (6S)-5,6,7,8-tetrahydrofolate. Lys229 carries the post-translational modification N6-(pyridoxal phosphate)lysine. 355 to 357 (SPF) serves as a coordination point for (6S)-5,6,7,8-tetrahydrofolate.

The protein belongs to the SHMT family. Homodimer. Pyridoxal 5'-phosphate is required as a cofactor.

It is found in the cytoplasm. It catalyses the reaction (6R)-5,10-methylene-5,6,7,8-tetrahydrofolate + glycine + H2O = (6S)-5,6,7,8-tetrahydrofolate + L-serine. Its pathway is one-carbon metabolism; tetrahydrofolate interconversion. It participates in amino-acid biosynthesis; glycine biosynthesis; glycine from L-serine: step 1/1. Functionally, catalyzes the reversible interconversion of serine and glycine with tetrahydrofolate (THF) serving as the one-carbon carrier. This reaction serves as the major source of one-carbon groups required for the biosynthesis of purines, thymidylate, methionine, and other important biomolecules. Also exhibits THF-independent aldolase activity toward beta-hydroxyamino acids, producing glycine and aldehydes, via a retro-aldol mechanism. This Sodalis glossinidius (strain morsitans) protein is Serine hydroxymethyltransferase.